Reading from the N-terminus, the 217-residue chain is Peroxiredoxin Q, chloroplastic (217 aa).

The transit peptide at 1–65 directs the protein to the chloroplast; the sequence is MAAICLPVAK…PPPSYSARIS (65 aa). A Thioredoxin domain is found at 70–217; that stretch reads VSKGSVPPQF…DETLKFLQSA (148 aa). Catalysis depends on cysteine 112, which acts as the Cysteine sulfenic acid (-SOH) intermediate. Cysteine 112 and cysteine 117 form a disulfide bridge.

The protein belongs to the peroxiredoxin family. BCP/PrxQ subfamily. As to quaternary structure, monomer. In terms of tissue distribution, expressed in the leaves, roots and stems.

The protein localises to the plastid. It is found in the chloroplast thylakoid lumen. It catalyses the reaction a hydroperoxide + [thioredoxin]-dithiol = an alcohol + [thioredoxin]-disulfide + H2O. Its function is as follows. Thiol-specific peroxidase that catalyzes the reduction of hydrogen peroxide and organic hydroperoxides to water and alcohols, respectively. Plays a role in cell protection against oxidative stress by detoxifying peroxides. Involved in both resistance against fungal disease and oxidative stress. This chain is Peroxiredoxin Q, chloroplastic (AFP1), found in Gentiana triflora (Clustered gentian).